The following is a 426-amino-acid chain: Enolase (426 aa).

Position 165 (Gln-165) interacts with (2R)-2-phosphoglycerate. Catalysis depends on Glu-209, which acts as the Proton donor. Residues Asp-244, Glu-287, and Asp-313 each coordinate Mg(2+). (2R)-2-phosphoglycerate is bound by residues Lys-338, Arg-367, Ser-368, and Lys-389. Lys-338 serves as the catalytic Proton acceptor.

This sequence belongs to the enolase family. Requires Mg(2+) as cofactor.

It localises to the cytoplasm. Its subcellular location is the secreted. It is found in the cell surface. It catalyses the reaction (2R)-2-phosphoglycerate = phosphoenolpyruvate + H2O. The protein operates within carbohydrate degradation; glycolysis; pyruvate from D-glyceraldehyde 3-phosphate: step 4/5. Catalyzes the reversible conversion of 2-phosphoglycerate (2-PG) into phosphoenolpyruvate (PEP). It is essential for the degradation of carbohydrates via glycolysis. This is Enolase from Methanococcus maripaludis (strain C7 / ATCC BAA-1331).